Here is a 331-residue protein sequence, read N- to C-terminus: Ornithine carbamoyltransferase (331 aa).

Residues 55–58 (STRT), Gln-82, Arg-106, and 133–136 (HPTQ) each bind carbamoyl phosphate. L-ornithine contacts are provided by residues Asn-166, Asp-230, and 234–235 (SM). Carbamoyl phosphate contacts are provided by residues 272–273 (CL) and Arg-317.

It belongs to the aspartate/ornithine carbamoyltransferase superfamily. OTCase family.

The protein resides in the cytoplasm. The enzyme catalyses carbamoyl phosphate + L-ornithine = L-citrulline + phosphate + H(+). It participates in amino-acid biosynthesis; L-arginine biosynthesis; L-arginine from L-ornithine and carbamoyl phosphate: step 1/3. Its function is as follows. Reversibly catalyzes the transfer of the carbamoyl group from carbamoyl phosphate (CP) to the N(epsilon) atom of ornithine (ORN) to produce L-citrulline. In Neisseria gonorrhoeae, this protein is Ornithine carbamoyltransferase (argF).